Reading from the N-terminus, the 543-residue chain is Tubby-related protein 1 (543 aa).

The disordered stretch occupies residues 1 to 290; the sequence is MPLQEETLRE…RASSPPVEVG (290 aa). Basic and acidic residues-rich tracts occupy residues 46–56 and 86–99; these read PETPDSLESKP and FLRDPEAKKRDPRE. Composition is skewed to acidic residues over residues 110-132 and 244-255; these read GGEENSEEDSDDDDNDDDEEEEE and KKEEEEEVEEEV. Over residues 267–276 the composition is skewed to basic residues; it reads GRAKGKGKKK.

Belongs to the TUB family. As to quaternary structure, homodimer. May interact with ABCF1, PSIP1, ZEB1 and HMGB2 (Potential). Interacts with F-actin. Interacts with DNM1. Interacts with TUB. Interacts with TYRO3. Retina specific. Detected in the outer plexiform layer in photoreceptor cells (at protein level).

Its subcellular location is the cytoplasm. The protein localises to the cell membrane. It is found in the secreted. It localises to the synapse. Functionally, required for normal development of photoreceptor synapses. Required for normal photoreceptor function and for long-term survival of photoreceptor cells. Interacts with cytoskeleton proteins and may play a role in protein transport in photoreceptor cells. Binds lipids, especially phosphatidylinositol 3-phosphate, phosphatidylinositol 4-phosphate, phosphatidylinositol 5-phosphate, phosphatidylinositol 3,4-bisphosphate, phosphatidylinositol 4,5-bisphosphate, phosphatidylinositol 3,4,5-bisphosphate, phosphatidylserine and phosphatidic acid (in vitro). Contribute to stimulation of phagocytosis of apoptotic retinal pigment epithelium (RPE) cells and macrophages. This is Tubby-related protein 1 (Tulp1) from Mus musculus (Mouse).